Reading from the N-terminus, the 80-residue chain is MKKVLYGIFAISALAATSAWAAPVQVGEAAGSAATSVSAGSSSATSVSTVSSAVGVALAATGGGDGSNTGTTTTTTTSTQ.

The first 21 residues, 1–21 (MKKVLYGIFAISALAATSAWA), serve as a signal peptide directing secretion. Residues 59-80 (AATGGGDGSNTGTTTTTTTSTQ) form a disordered region. Residues 68 to 80 (NTGTTTTTTTSTQ) show a composition bias toward low complexity.

This is an uncharacterized protein from Escherichia coli O157:H7.